The chain runs to 403 residues: Alkaline protease 1 (403 aa).

Positions 1-21 (MHSFKRSLLLLGALLPAVFGA) are cleaved as a signal peptide. Positions 22–124 (PVEPRRAAEK…QIWYIDALTS (103 aa)) are excised as a propeptide. The 85-residue stretch at 35–119 (KYIVTFKSGL…HVEEDQIWYI (85 aa)) folds into the Inhibitor I9 domain. The Peptidase S8 domain occupies 129 to 403 (PWGLGAISHK…NLLAYNGADE (275 aa)). Residues Asp-161 and His-192 each act as charge relay system in the active site. A glycan (N-linked (GlcNAc...) asparagine) is linked at Asn-252. Residue Ser-348 is the Charge relay system of the active site.

It belongs to the peptidase S8 family.

It localises to the secreted. The catalysed reaction is Hydrolysis of proteins with broad specificity, and of Bz-Arg-OEt &gt; Ac-Tyr-OEt. Does not hydrolyze peptide amides.. Functionally, secreted alkaline protease that allows assimilation of proteinaceous substrates. The protein is Alkaline protease 1 (alp1) of Emericella nidulans (strain FGSC A4 / ATCC 38163 / CBS 112.46 / NRRL 194 / M139) (Aspergillus nidulans).